A 468-amino-acid chain; its full sequence is Zinc transporter SLC39A7 (468 aa).

Residues 10-30 (WVAVGLLTWAALGLLVAGHEG) traverse the membrane as a helical segment. 2 stretches are compositionally biased toward basic and acidic residues: residues 36–56 (RDVEEDFHGHSHGHSHEDFHH) and 64–100 (HTHESIWHGHAHSHDHGHSREDVHHGHSHGHSHDSLH). Positions 36 to 116 (RDVEEDFHGH…SHGASREAGA (81 aa)) are disordered. Pros-methylhistidine is present on H64. The next 3 membrane-spanning stretches (helical) occupy residues 132-152 (ALGATVLISAAPFFVLFLIPV), 163-183 (LQILLSFASGGLLGDAFLHLI), and 208-228 (GPILSVGLWVLSGIVAFLVVE). Residues 237–248 (GHGHAHAHGHGH) show a composition bias toward basic residues. The segment at 237–313 (GHGHAHAHGH…NPEEEKTGSD (77 aa)) is disordered. Residues 249-312 (SHGDSHAHGH…QNPEEEKTGS (64 aa)) are compositionally biased toward basic and acidic residues. Helical transmembrane passes span 385–405 (LTAIGALAGTACALLTEGGAV), 409–429 (VAGGAGPGWVLPFTAGGFIYV), and 447–467 (SLLEVLGLLGGVAMMVLIAHL).

It belongs to the ZIP transporter (TC 2.A.5) family. KE4/Catsup subfamily. As to quaternary structure, homodimer. Post-translationally, rapidly phosphorylated by CK2 following Zn(2+) treatment. This phosphorylation is required for efficient cytosolic Zn(2+) release.

Its subcellular location is the endoplasmic reticulum membrane. It localises to the golgi apparatus. The protein localises to the cis-Golgi network membrane. The enzyme catalyses Zn(2+)(in) = Zn(2+)(out). Transports Zn(2+) from the endoplasmic reticulum (ER)/Golgi apparatus to the cytosol, playing an essential role in the regulation of cytosolic zinc levels. Acts as a gatekeeper of zinc release from intracellular stores, requiring post-translational activation by phosphorylation on residues, resulting in activation of multiple downstream pathways leading to cell growth and proliferation. Has an essential role in B cell development and is required for proper B cell receptor signaling. Plays an important role in maintaining intestinal epithelial homeostasis and skin dermis development by regulating ER function. Controls cell signaling pathways involved in glucose metabolism in skeletal muscle. Has a protective role against ER stress in different biological contexts. Mediates Zn(2+)-induced ferroptosis. The sequence is that of Zinc transporter SLC39A7 from Rattus norvegicus (Rat).